Consider the following 155-residue polypeptide: Phytohormone-binding protein CSBP (155 aa).

Residues L22, Q67, E69, and 139 to 142 (TLMY) each bind trans-zeatin. Q67 lines the gibberellin A3 pocket. T139 is a gibberellin A3 binding site.

It belongs to the BetVI family. As to quaternary structure, monomer.

Functionally, binds the cytokinin trans-zeatin in vitro. Binds gibberellin A3 (GA3) in vitro. The sequence is that of Phytohormone-binding protein CSBP from Vigna radiata var. radiata (Mung bean).